Reading from the N-terminus, the 168-residue chain is WAP four-disulfide core domain protein 2 (168 aa).

A signal peptide spans 1-30 (MPACRLCLLATGLLLGLLLFTPLSATGTRA). 2 consecutive WAP domains span residues 31–74 (EKPG…SKPN) and 119–167 (NGEK…TTPK). 4 cysteine pairs are disulfide-bonded: C36–C62, C45–C66, C49–C61, and C55–C70. The interval 100-123 (PLSRGQVSTKPPVVTKEGGNGEKQ) is disordered. Disulfide bonds link C126–C154, C137–C158, C141–C153, and C147–C163.

Homotrimer; disulfide-linked.

The protein localises to the secreted. Its function is as follows. Broad range protease inhibitor. The polypeptide is WAP four-disulfide core domain protein 2 (Wfdc2) (Rattus norvegicus (Rat)).